A 232-amino-acid polypeptide reads, in one-letter code: Large ribosomal subunit protein uL1 (232 aa).

Belongs to the universal ribosomal protein uL1 family. As to quaternary structure, part of the 50S ribosomal subunit.

Binds directly to 23S rRNA. The L1 stalk is quite mobile in the ribosome, and is involved in E site tRNA release. In terms of biological role, protein L1 is also a translational repressor protein, it controls the translation of the L11 operon by binding to its mRNA. The polypeptide is Large ribosomal subunit protein uL1 (Methylorubrum populi (strain ATCC BAA-705 / NCIMB 13946 / BJ001) (Methylobacterium populi)).